A 291-amino-acid polypeptide reads, in one-letter code: Sulfotransferase 1A1 (291 aa).

44–49 (KSGTTW) provides a ligand contact to 3'-phosphoadenylyl sulfate. 102–104 (KTH) is a substrate binding site. The active-site Proton acceptor is the His104. 3'-phosphoadenylyl sulfate-binding positions include Arg126, Ser134, Tyr189, 223–228 (TSFKKM), and 251–255 (FMRKG). Ser134 carries the phosphoserine modification.

This sequence belongs to the sulfotransferase 1 family. Homodimer. In terms of processing, the N-terminus is blocked. In terms of tissue distribution, liver, kidney, heart and colon.

Its subcellular location is the cytoplasm. The catalysed reaction is a phenol + 3'-phosphoadenylyl sulfate = an aryl sulfate + adenosine 3',5'-bisphosphate + H(+). It catalyses the reaction 17beta-estradiol + 3'-phosphoadenylyl sulfate = 17beta-estradiol 3-sulfate + adenosine 3',5'-bisphosphate + H(+). The enzyme catalyses 4-ethylphenol + 3'-phosphoadenylyl sulfate = 4-ethylphenyl sulfate + adenosine 3',5'-bisphosphate + H(+). It carries out the reaction 4-nitrophenol + 3'-phosphoadenylyl sulfate = 4-nitrophenyl sulfate + adenosine 3',5'-bisphosphate. The catalysed reaction is dopamine + 3'-phosphoadenylyl sulfate = dopamine 3-O-sulfate + adenosine 3',5'-bisphosphate + H(+). It catalyses the reaction dopamine + 3'-phosphoadenylyl sulfate = dopamine 4-O-sulfate + adenosine 3',5'-bisphosphate + H(+). The enzyme catalyses 3,3',5-triiodo-L-thyronine + 3'-phosphoadenylyl sulfate = 3,3',5-triiodo-L-thyronine sulfate + adenosine 3',5'-bisphosphate + H(+). It carries out the reaction 3,3',5'-triiodo-L-thyronine + 3'-phosphoadenylyl sulfate = 3,3',5'-triiodo-L-thyronine sulfate + adenosine 3',5'-bisphosphate + H(+). The catalysed reaction is 3,3'-diiodo-L-thyronine + 3'-phosphoadenylyl sulfate = 3,3'-diiodo-L-thyronine sulfate + adenosine 3',5'-bisphosphate + H(+). It catalyses the reaction L-thyroxine + 3'-phosphoadenylyl sulfate = L-thyroxine sulfate + adenosine 3',5'-bisphosphate + H(+). Sulfotransferase that utilizes 3'-phospho-5'-adenylyl sulfate (PAPS) as sulfonate donor to catalyze the sulfate conjugation of a wide variety of acceptor molecules bearing a hydroxyl or an amine group. Sulfonation increases the water solubility of most compounds, and therefore their renal excretion, but it can also result in bioactivation to form active metabolites. Displays broad substrate specificity for small phenolic compounds. Plays an important roles in the sulfonation of endogenous molecules such as steroid hormones. Mediates the sulfate conjugation of a variety of xenobiotics, including the drugs acetaminophen and minoxidil. Mediates also the metabolic activation of carcinogenic N-hydroxyarylamines leading to highly reactive intermediates capable of forming DNA adducts, potentially resulting in mutagenesis. May play a role in gut microbiota-host metabolic interaction. O-sulfonates 4-ethylphenol (4-EP), a dietary tyrosine-derived metabolite produced by gut bacteria. The product 4-EPS crosses the blood-brain barrier and may negatively regulate oligodendrocyte maturation and myelination, affecting the functional connectivity of different brain regions associated with the limbic system. Catalyzes the sulfate conjugation of dopamine. Catalyzes the sulfation of T4 (L-thyroxine/3,5,3',5'-tetraiodothyronine), T3 (3,5,3'-triiodothyronine), rT3 (3,3',5'-triiodothyronine) and 3,3'-T2 (3,3'-diiodothyronine), with a substrate preference of 3,3'-T2 &gt; rT3 &gt; T3 &gt; T4. The sequence is that of Sulfotransferase 1A1 (Sult1a1) from Rattus norvegicus (Rat).